Reading from the N-terminus, the 696-residue chain is Phosphate acetyltransferase (696 aa).

A phosphate acetyltransferase region spans residues 367-696; that stretch reads FEHKLLEQAR…QSPHEKATAQ (330 aa).

It in the N-terminal section; belongs to the CobB/CobQ family. This sequence in the C-terminal section; belongs to the phosphate acetyltransferase and butyryltransferase family.

It localises to the cytoplasm. It catalyses the reaction acetyl-CoA + phosphate = acetyl phosphate + CoA. It participates in metabolic intermediate biosynthesis; acetyl-CoA biosynthesis; acetyl-CoA from acetate: step 2/2. Its function is as follows. Involved in acetate metabolism. This chain is Phosphate acetyltransferase (pta), found in Streptomyces avermitilis (strain ATCC 31267 / DSM 46492 / JCM 5070 / NBRC 14893 / NCIMB 12804 / NRRL 8165 / MA-4680).